We begin with the raw amino-acid sequence, 428 residues long: Glutamate-1-semialdehyde 2,1-aminomutase (428 aa).

Lys-265 carries the post-translational modification N6-(pyridoxal phosphate)lysine.

The protein belongs to the class-III pyridoxal-phosphate-dependent aminotransferase family. HemL subfamily. Homodimer. Pyridoxal 5'-phosphate is required as a cofactor.

Its subcellular location is the cytoplasm. It carries out the reaction (S)-4-amino-5-oxopentanoate = 5-aminolevulinate. It functions in the pathway porphyrin-containing compound metabolism; protoporphyrin-IX biosynthesis; 5-aminolevulinate from L-glutamyl-tRNA(Glu): step 2/2. The polypeptide is Glutamate-1-semialdehyde 2,1-aminomutase (Shewanella loihica (strain ATCC BAA-1088 / PV-4)).